The following is a 421-amino-acid chain: Aspartokinase (421 aa).

Residue 7–10 (KYGG) coordinates ATP. 25–30 (RIVETK) contacts substrate. Residue serine 41 coordinates ATP. Substrate-binding positions include 45–49 (DTTDD), glutamate 74, 125–126 (LD), 151–154 (RGGS), and serine 154. ATP contacts are provided by residues 174–175 (TD), 180–185 (FTADPR), and lysine 210. ACT domains follow at residues 267 to 348 (VTVV…GKVS) and 349 to 421 (LIGA…GTGR). Residues aspartate 274, 274-279 (DVPGYA), 292-294 (NID), glutamine 298, 360-361 (VT), 374-375 (NI), and 381-382 (SE) each bind substrate.

This sequence belongs to the aspartokinase family. Heterotetramer consisting of 2 isoforms Alpha (catalytic and regulation) and of a homodimer of 2 isoforms Beta (regulation).

The enzyme catalyses L-aspartate + ATP = 4-phospho-L-aspartate + ADP. It participates in amino-acid biosynthesis; L-lysine biosynthesis via DAP pathway; (S)-tetrahydrodipicolinate from L-aspartate: step 1/4. The protein operates within amino-acid biosynthesis; L-methionine biosynthesis via de novo pathway; L-homoserine from L-aspartate: step 1/3. Its pathway is amino-acid biosynthesis; L-threonine biosynthesis; L-threonine from L-aspartate: step 1/5. Feedback inhibition by lysine and threonine. Catalyzes the phosphorylation of the beta-carboxyl group of aspartic acid with ATP to yield 4-phospho-L-aspartate, which is involved in the branched biosynthetic pathway leading to the biosynthesis of amino acids lysine, threonine, isoleucine and methionine. This Mycolicibacterium smegmatis (Mycobacterium smegmatis) protein is Aspartokinase (ask).